Here is a 1223-residue protein sequence, read N- to C-terminus: WD repeat-containing protein 11 (1223 aa).

WD repeat units lie at residues 59–108 and 111–154; these read KHKA…AQCE and EHVK…KLWK. Phosphoserine occurs at positions 205 and 209. The stretch at 354–393 is one WD 3 repeat; it reads KTVRPFSMVCCPVNENAAALIVSDGRVMIWELKSAVCSRN. 2 positions are modified to phosphoserine: Ser-401 and Ser-405. WD repeat units lie at residues 470 to 509, 565 to 604, 707 to 744, 746 to 786, 792 to 830, and 892 to 939; these read RMCP…LHKE, NDES…LLRE, GSMG…SRGI, THRS…MVSS, NVTF…TCFR, and ALSN…HSLS.

Component of the complex WDR11 composed of C17orf75, FAM91A1 and WDR11; FAM91A1 and WDR11 are required for proper location of the complex. Interacts with GLI3; the interaction associateS EMX1 with GLI3. Interacts with TBC1D23; this interaction may be indirect and recruits TBC1D23 to AP-1-derived vesicles. Interacts (via the N-terminal and the central portion of the protein) with EMX1. As to expression, broadly expressed in various organs including brain, eye,ear, lung, heart, kideny and gonads. Cerebral cortex. The entire developing central nervous system, except for the spinal cord, reveals expression. Expressed in the neuroepithelium, including the diencephalic region that gives rise to hypothalamic neurons. In the adult brain, intense expression is restricted to the olfactory bulb, the olfaction-related piriform cortex, the granule cell layer of the cerebellum, and neurons of the hippocampal formation. The brain demonstrated expression scattered throughout the hypothalamus, sometimes in clusters of neurons.

It is found in the cytoplasm. Its subcellular location is the cytoskeleton. The protein resides in the cilium basal body. It localises to the nucleus. The protein localises to the cilium axoneme. It is found in the cytoplasmic vesicle. Its subcellular location is the golgi apparatus. The protein resides in the trans-Golgi network. Its function is as follows. Involved in the Hedgehog (Hh) signaling pathway, is essential for normal ciliogenesis. Regulates the proteolytic processing of GLI3 and cooperates with the transcription factor EMX1 in the induction of downstream Hh pathway gene expression and gonadotropin-releasing hormone production. WDR11 complex facilitates the tethering of Adaptor protein-1 complex (AP-1)-derived vesicles. WDR11 complex acts together with TBC1D23 to facilitate the golgin-mediated capture of vesicles generated using AP-1. In Mus musculus (Mouse), this protein is WD repeat-containing protein 11 (Wdr11).